Consider the following 155-residue polypeptide: Small ribosomal subunit protein uS17 (155 aa).

This sequence belongs to the universal ribosomal protein uS17 family. Component of the small ribosomal subunit. Mature ribosomes consist of a small (40S) and a large (60S) subunit. The 40S subunit contains about 32 different proteins and 1 molecule of RNA (18S). The 60S subunit contains 45 different proteins and 3 molecules of RNA (25S, 5.8S and 5S).

It is found in the cytoplasm. Component of the ribosome, a large ribonucleoprotein complex responsible for the synthesis of proteins in the cell. The small ribosomal subunit (SSU) binds messenger RNAs (mRNAs) and translates the encoded message by selecting cognate aminoacyl-transfer RNA (tRNA) molecules. The large subunit (LSU) contains the ribosomal catalytic site termed the peptidyl transferase center (PTC), which catalyzes the formation of peptide bonds, thereby polymerizing the amino acids delivered by tRNAs into a polypeptide chain. The nascent polypeptides leave the ribosome through a tunnel in the LSU and interact with protein factors that function in enzymatic processing, targeting, and the membrane insertion of nascent chains at the exit of the ribosomal tunnel. The polypeptide is Small ribosomal subunit protein uS17 (Candida albicans (strain SC5314 / ATCC MYA-2876) (Yeast)).